The following is a 271-amino-acid chain: Bis(5'-nucleosyl)-tetraphosphatase, symmetrical (271 aa).

The protein belongs to the Ap4A hydrolase family.

It catalyses the reaction P(1),P(4)-bis(5'-adenosyl) tetraphosphate + H2O = 2 ADP + 2 H(+). Hydrolyzes diadenosine 5',5'''-P1,P4-tetraphosphate to yield ADP. The polypeptide is Bis(5'-nucleosyl)-tetraphosphatase, symmetrical (Aliivibrio fischeri (strain MJ11) (Vibrio fischeri)).